We begin with the raw amino-acid sequence, 263 residues long: HTH-type transcriptional regulator KdgR (263 aa).

The 62-residue stretch at 13–74 folds into the HTH iclR-type domain; sequence VSSVLKVFGI…GESEKYSLTL (62 aa). The segment at residues 34-53 is a DNA-binding region (H-T-H motif); sequence ITELSQRVMMSKSTVYRFLQ. Residues 89-258 form the IclR-ED domain; the sequence is LIRSADIQMR…ARKISAQMGY (170 aa).

Its subcellular location is the cytoplasm. Transcriptional repressor that negatively regulates the expression of kdgT, kdgK and kdgA, which encode proteins involved in transport and catabolism of 2-keto-3-deoxygluconate (KDG). Also represses expression of eda, which encodes the Entner-Doudoroff aldolase, by binding to its P2 promoter region. This is HTH-type transcriptional regulator KdgR from Escherichia coli (strain K12).